The following is a 178-amino-acid chain: Orotate phosphoribosyltransferase (178 aa).

Residues R92, K93, K96, and 118-126 (EDVTTTGGS) contribute to the 5-phospho-alpha-D-ribose 1-diphosphate site. Residues T122 and R150 each coordinate orotate.

Belongs to the purine/pyrimidine phosphoribosyltransferase family. PyrE subfamily. In terms of assembly, homodimer. Mg(2+) serves as cofactor.

It carries out the reaction orotidine 5'-phosphate + diphosphate = orotate + 5-phospho-alpha-D-ribose 1-diphosphate. Its pathway is pyrimidine metabolism; UMP biosynthesis via de novo pathway; UMP from orotate: step 1/2. In terms of biological role, catalyzes the transfer of a ribosyl phosphate group from 5-phosphoribose 1-diphosphate to orotate, leading to the formation of orotidine monophosphate (OMP). The protein is Orotate phosphoribosyltransferase of Methanosphaera stadtmanae (strain ATCC 43021 / DSM 3091 / JCM 11832 / MCB-3).